The sequence spans 1191 residues: DNA topoisomerase 2 (1191 aa).

Residues N64, N95, and 142 to 149 each bind ATP; that span reads GTNGVGLK. Mg(2+)-binding residues include E437, D538, and D540. The region spanning 706–1173 is the Topo IIA-type catalytic domain; the sequence is IPNFLDGMTR…PGASVWLEEI (468 aa). Y799 (O-(5'-phospho-DNA)-tyrosine intermediate) is an active-site residue.

This sequence belongs to the type II topoisomerase family. Requires Mg(2+) as cofactor. Mn(2+) serves as cofactor. The cofactor is Ca(2+).

It is found in the host cytoplasm. It carries out the reaction ATP-dependent breakage, passage and rejoining of double-stranded DNA.. Type II topoisomerase. Processively relaxes supercoiled DNA. Displays DNA-supercoiling activity only when associated with the viral histone-like protein. This is DNA topoisomerase 2 from Ornithodoros (relapsing fever ticks).